A 303-amino-acid chain; its full sequence is Target of rapamycin complex subunit LST8 (303 aa).

7 WD repeats span residues 1–27, 30–68, 73–112, 114–153, 157–196, 205–244, and 248–287; these read MSVI…CSRT, HSDS…PNPV, GHRG…IPRN, KHNA…CTHQ, EDDT…DASH, AHST…KLET, and GHQR…IVRQ.

This sequence belongs to the WD repeat LST8 family. As to quaternary structure, the target of rapamycin complex 1 (TORC1) is composed of at least KOG1, LST8, TCO89 and either TOR1 (TORC1-A) or TOR2 (TORC1-B). TORC1 binds to and is inhibited by FKBP-rapamycin. Interacts with PIB2; following activation of PIB2 by glutamine or cysteine and as part of the TORC1 complex. The target of rapamycin complex 2 (TORC2) is composed of at least AVO1, AVO2, BIT61, LST8, TOR2 and TSC11. TORC2 forms a homodimer. Contrary to TORC1, TORC2 does not bind to and is not sensitive to FKBP-rapamycin. LST8 binds to the C-terminal kinase domain in TOR2.

It is found in the cell membrane. The protein localises to the vacuole membrane. Essential component of both TORC1 and TORC2. TORC1 regulates multiple cellular processes to control cell growth in response to environmental signals. Nutrient limitation and environmental stress signals cause inactivation of TORC1. Active TORC1 positively controls ribosome biogenesis via control of rRNA, ribosomal protein and tRNA gene expression, and rRNA processing. TORC1 positively controls protein biosynthesis by regulation of mRNA stability, translation initiation factor activity, and high-affinity amino acid permeases that serve to provide amino acids for use by the translation machinery. TORC1 also promotes growth by sequestering a number of nutrient and general stress-responsive transcription factors in the cytoplasm. TORC1 negatively controls macroautophagy, a process to recycle surplus cytoplasmic mass under nutrient starvation conditions. LST8 is involved in the negative regulation of transcription factors GLN3 and RTG1-RTG3, limiting the synthesis of alpha-ketoglutarate, glutamate and glutamine. LST8 is required for targeting of amino acid permeases (AAPs) to the plasma membrane. TORC2 regulates cell cycle-dependent polarization of the actin-cytoskeleton, cell wall integrity, and receptor endocytosis. TORC2 controls polarity of the actin cytoskeleton, which is required for orienting the secretory pathway toward discrete growth sites, via the RHO1/PKC1/MAPK cell integrity pathway. LST8 is involved in maintenance of cell wall integrity. LST8 modulates TOR2 kinase activity. In Saccharomyces cerevisiae (strain ATCC 204508 / S288c) (Baker's yeast), this protein is Target of rapamycin complex subunit LST8.